A 299-amino-acid chain; its full sequence is ATP phosphoribosyltransferase (299 aa).

This sequence belongs to the ATP phosphoribosyltransferase family. Long subfamily. In terms of assembly, equilibrium between an active dimeric form, an inactive hexameric form and higher aggregates. Interconversion between the various forms is largely reversible and is influenced by the natural substrates and inhibitors of the enzyme. Mg(2+) is required as a cofactor.

The protein localises to the cytoplasm. The enzyme catalyses 1-(5-phospho-beta-D-ribosyl)-ATP + diphosphate = 5-phospho-alpha-D-ribose 1-diphosphate + ATP. The protein operates within amino-acid biosynthesis; L-histidine biosynthesis; L-histidine from 5-phospho-alpha-D-ribose 1-diphosphate: step 1/9. Its activity is regulated as follows. Feedback inhibited by histidine. In terms of biological role, catalyzes the condensation of ATP and 5-phosphoribose 1-diphosphate to form N'-(5'-phosphoribosyl)-ATP (PR-ATP). Has a crucial role in the pathway because the rate of histidine biosynthesis seems to be controlled primarily by regulation of HisG enzymatic activity. The chain is ATP phosphoribosyltransferase from Enterobacter sp. (strain 638).